The following is a 264-amino-acid chain: Carbonic anhydrase 7 (264 aa).

Residues 5-262 (HCWGYGQDDG…LKGRVVKASF (258 aa)) form the Alpha-carbonic anhydrase domain. Catalysis depends on His-66, which acts as the Proton donor/acceptor. Zn(2+) contacts are provided by His-96, His-98, and His-121. 201–202 (TT) provides a ligand contact to substrate.

The protein belongs to the alpha-carbonic anhydrase family. The cofactor is Zn(2+).

The protein localises to the cytoplasm. The enzyme catalyses hydrogencarbonate + H(+) = CO2 + H2O. Functionally, reversible hydration of carbon dioxide. In Mus musculus (Mouse), this protein is Carbonic anhydrase 7 (Ca7).